Consider the following 261-residue polypeptide: uncharacterized protein (261 aa).

A coiled-coil region spans residues K16 to Q147.

The protein resides in the cytoplasm. This is an uncharacterized protein from Schizosaccharomyces pombe (strain 972 / ATCC 24843) (Fission yeast).